The primary structure comprises 410 residues: Arginine deiminase (410 aa).

The active-site Amidino-cysteine intermediate is Cys400.

The protein belongs to the arginine deiminase family.

It is found in the cytoplasm. It carries out the reaction L-arginine + H2O = L-citrulline + NH4(+). It functions in the pathway amino-acid degradation; L-arginine degradation via ADI pathway; carbamoyl phosphate from L-arginine: step 1/2. The sequence is that of Arginine deiminase (arcA) from Lactococcus lactis subsp. lactis (strain IL1403) (Streptococcus lactis).